The primary structure comprises 213 residues: Small ribosomal subunit protein uS4 (213 aa).

Residues 16–53 (GTDLGLKSGVKPYDVKTKKSARPPGQHGVSRNKSSEYS) form a disordered region. Residues 44–53 (VSRNKSSEYS) show a composition bias toward polar residues. Residues 97 to 163 (SRLDNVVYRM…EKSREQLRIK (67 aa)) form the S4 RNA-binding domain.

This sequence belongs to the universal ribosomal protein uS4 family. Part of the 30S ribosomal subunit. Contacts protein S5. The interaction surface between S4 and S5 is involved in control of translational fidelity.

One of the primary rRNA binding proteins, it binds directly to 16S rRNA where it nucleates assembly of the body of the 30S subunit. In terms of biological role, with S5 and S12 plays an important role in translational accuracy. This Psychrobacter arcticus (strain DSM 17307 / VKM B-2377 / 273-4) protein is Small ribosomal subunit protein uS4.